The following is a 232-amino-acid chain: 6-phosphogluconolactonase (232 aa).

The protein belongs to the glucosamine/galactosamine-6-phosphate isomerase family. 6-phosphogluconolactonase subfamily.

It carries out the reaction 6-phospho-D-glucono-1,5-lactone + H2O = 6-phospho-D-gluconate + H(+). The protein operates within carbohydrate degradation; pentose phosphate pathway; D-ribulose 5-phosphate from D-glucose 6-phosphate (oxidative stage): step 2/3. Its function is as follows. Hydrolysis of 6-phosphogluconolactone to 6-phosphogluconate. This chain is 6-phosphogluconolactonase (pgl), found in Caulobacter vibrioides (strain ATCC 19089 / CIP 103742 / CB 15) (Caulobacter crescentus).